The chain runs to 161 residues: DNA-binding protein inhibitor ID-4 (161 aa).

Residues 52–104 (AAEAAADEPALCLQCDMNDCYSRLRRLVPTIPPNKKVSKVEILQHVIDYILDL) form the bHLH domain. The span at 117 to 126 (QPPPPAPPHH) shows a compositional bias: pro residues. The segment at 117–161 (QPPPPAPPHHPAGTCPAAPPRTPLTALNTDPAGAVNKQGDSILCR) is disordered.

In terms of assembly, heterodimer with other HLH proteins.

The protein localises to the nucleus. Transcriptional regulator (lacking a basic DNA binding domain) which negatively regulates the basic helix-loop-helix (bHLH) transcription factors by forming heterodimers and inhibiting their DNA binding and transcriptional activity. Implicated in regulating a variety of cellular processes, including cellular growth, senescence, differentiation, apoptosis, angiogenesis, and neoplastic transformation. In Homo sapiens (Human), this protein is DNA-binding protein inhibitor ID-4 (ID4).